A 150-amino-acid polypeptide reads, in one-letter code: Large ribosomal subunit protein bL9 (150 aa).

The protein belongs to the bacterial ribosomal protein bL9 family.

Functionally, binds to the 23S rRNA. This is Large ribosomal subunit protein bL9 from Ralstonia pickettii (strain 12J).